Reading from the N-terminus, the 181-residue chain is MGRTLENKKEIVADLKETLGESTLALVIEYQGLTVAEITDLRKRLRPSGTVCKVTKNTLMGIAIQDDEKWQPLSELLKGSSAFLLVKEDFSSAIKAYQEFQKVTKKTELRGGVMEGRLLKEPDVKALGDLPSKEQLMGQIAGAINALATKIAVGINEVPGGLARALQAVADKENGGDDSAA.

This sequence belongs to the universal ribosomal protein uL10 family. In terms of assembly, part of the ribosomal stalk of the 50S ribosomal subunit. The N-terminus interacts with L11 and the large rRNA to form the base of the stalk. The C-terminus forms an elongated spine to which L12 dimers bind in a sequential fashion forming a multimeric L10(L12)X complex.

Its function is as follows. Forms part of the ribosomal stalk, playing a central role in the interaction of the ribosome with GTP-bound translation factors. This chain is Large ribosomal subunit protein uL10, found in Nostoc sp. (strain PCC 7120 / SAG 25.82 / UTEX 2576).